The primary structure comprises 485 residues: Catalase isozyme 1 (485 aa).

Residues H58 and N131 contribute to the active site. Residue Y341 coordinates heme.

It belongs to the catalase family. In terms of assembly, homotetramer. Heme is required as a cofactor.

Its subcellular location is the peroxisome. It carries out the reaction 2 H2O2 = O2 + 2 H2O. Occurs in almost all aerobically respiring organisms and serves to protect cells from the toxic effects of hydrogen peroxide. The protein is Catalase isozyme 1 (CAT1) of Nicotiana plumbaginifolia (Leadwort-leaved tobacco).